The chain runs to 370 residues: tRNA-specific 2-thiouridylase MnmA (370 aa).

ATP is bound by residues glycine 9 to serine 16 and methionine 35. Residues asparagine 95 to aspartate 97 form an interaction with target base in tRNA region. Cysteine 100 functions as the Nucleophile in the catalytic mechanism. An intrachain disulfide couples cysteine 100 to cysteine 196. Glycine 124 serves as a coordination point for ATP. Positions lysine 146 to glutamine 148 are interaction with tRNA. The active-site Cysteine persulfide intermediate is the cysteine 196. Positions arginine 308–tyrosine 309 are interaction with tRNA.

The protein belongs to the MnmA/TRMU family.

Its subcellular location is the cytoplasm. It carries out the reaction S-sulfanyl-L-cysteinyl-[protein] + uridine(34) in tRNA + AH2 + ATP = 2-thiouridine(34) in tRNA + L-cysteinyl-[protein] + A + AMP + diphosphate + H(+). Functionally, catalyzes the 2-thiolation of uridine at the wobble position (U34) of tRNA, leading to the formation of s(2)U34. The sequence is that of tRNA-specific 2-thiouridylase MnmA from Ralstonia pickettii (strain 12J).